The following is a 152-amino-acid chain: 3-dehydroquinate dehydratase (152 aa).

The active-site Proton acceptor is tyrosine 26. 3 residues coordinate substrate: asparagine 78, histidine 84, and aspartate 91. Residue histidine 104 is the Proton donor of the active site. Residues 105–106 (IS) and arginine 115 each bind substrate.

Belongs to the type-II 3-dehydroquinase family. As to quaternary structure, homododecamer.

It carries out the reaction 3-dehydroquinate = 3-dehydroshikimate + H2O. The protein operates within metabolic intermediate biosynthesis; chorismate biosynthesis; chorismate from D-erythrose 4-phosphate and phosphoenolpyruvate: step 3/7. In terms of biological role, catalyzes a trans-dehydration via an enolate intermediate. This chain is 3-dehydroquinate dehydratase, found in Buchnera aphidicola subsp. Cinara cedri (strain Cc).